The chain runs to 189 residues: Gluconokinase (189 aa).

16 to 23 (GVSGAGKS) is a binding site for ATP.

Belongs to the gluconokinase GntK/GntV family. In terms of assembly, monomer.

It catalyses the reaction D-gluconate + ATP = 6-phospho-D-gluconate + ADP + H(+). It functions in the pathway carbohydrate acid metabolism; D-gluconate degradation. Functionally, phosphorylates gluconate to 6-phosphogluconate. In Arabidopsis thaliana (Mouse-ear cress), this protein is Gluconokinase.